The primary structure comprises 305 residues: Mitochondrial brown fat uncoupling protein 1 (305 aa).

The Mitochondrial intermembrane portion of the chain corresponds to Met1–Pro10. Residues Pro11–Phe32 traverse the membrane as a helical segment. Solcar repeat units follow at residues Pro11–Phe102, Ala109–Ala199, and Asp208–Glu293. Over Pro33–Lys73 the chain is Mitochondrial matrix. Residue Lys56 coordinates fatty acid 16:0. A helical transmembrane segment spans residues Leu74 to Tyr96. Residues Asp97–Lys114 are Mitochondrial intermembrane-facing. A helical membrane pass occupies residues Ile115–Pro131. Residues Thr132–Thr176 are Mitochondrial matrix-facing. The helical transmembrane segment at Pro177–Tyr193 threads the bilayer. Residues Asp194–Val210 lie on the Mitochondrial intermembrane side of the membrane. A helical membrane pass occupies residues Pro211 to Pro230. Residues Val231–Ala264 are Mitochondrial matrix-facing. Cys252 is subject to Cysteine sulfenic acid (-SOH). The chain crosses the membrane as a helical span at residues Phe265–Phe287. Residue Lys267 coordinates fatty acid 16:0. Over Glu288–Thr305 the chain is Mitochondrial intermembrane.

It belongs to the mitochondrial carrier (TC 2.A.29) family. Most probably functions as a monomer. Binds one purine nucleotide per monomer. However, has also been suggested to function as a homodimer or a homotetramer. Tightly associates with cardiolipin in the mitochondrion inner membrane; may stabilize and regulate its activity. Post-translationally, may undergo sulfenylation upon cold exposure. May increase the sensitivity of UCP1 thermogenic function to the activation by noradrenaline probably through structural effects. May undergo ubiquitin-mediated proteasomal degradation.

The protein resides in the mitochondrion inner membrane. The enzyme catalyses H(+)(in) = H(+)(out). Its activity is regulated as follows. Has no constitutive proton transporter activity and has to be activated by long-chain fatty acids/LCFAs. Inhibited by purine nucleotides. Both purine nucleotides and LCFAs bind the cytosolic side of the transporter and directly compete to activate or inhibit it. Activated by noradrenaline and reactive oxygen species. Despite lacking canonical translational encoding for selenocysteine, a small pool of the protein has been observed to selectively incorporate selenocysteine at 'Cys-252'. Selenocysteine-modified protein is highly sensitive to redox modification and may constitute a pool of protein highly sensitive to activation by elevated levels of reactive oxygen species (ROS). Mitochondrial protein responsible for thermogenic respiration, a specialized capacity of brown adipose tissue and beige fat that participates in non-shivering adaptive thermogenesis to temperature and diet variations and more generally to the regulation of energy balance. Functions as a long-chain fatty acid/LCFA and proton symporter, simultaneously transporting one LCFA and one proton through the inner mitochondrial membrane. However, LCFAs remaining associated with the transporter via their hydrophobic tails, it results in an apparent transport of protons activated by LCFAs. Thereby, dissipates the mitochondrial proton gradient and converts the energy of substrate oxydation into heat instead of ATP. Regulates the production of reactive oxygen species/ROS by mitochondria. The chain is Mitochondrial brown fat uncoupling protein 1 from Ovis aries (Sheep).